A 191-amino-acid chain; its full sequence is Prostaglandin-H2 D-isomerase (191 aa).

The N-terminal stretch at 1–24 is a signal peptide; sequence MAALHTLWMGLVLLGVLGVLQTQA. The residue at position 25 (Gln-25) is a Pyrrolidone carboxylic acid. N-linked (GlcNAc...) asparagine glycosylation occurs at Asn-51. Cys-65 acts as the Nucleophile in catalysis. A glycan (N-linked (GlcNAc...) asparagine) is linked at Asn-78. A disulfide bridge connects residues Cys-89 and Cys-186.

This sequence belongs to the calycin superfamily. Lipocalin family. As to quaternary structure, monomer.

The protein resides in the rough endoplasmic reticulum. It localises to the nucleus membrane. It is found in the golgi apparatus. Its subcellular location is the cytoplasm. The protein localises to the perinuclear region. The protein resides in the secreted. The enzyme catalyses prostaglandin H2 = prostaglandin D2. Functionally, catalyzes the conversion of PGH2 to PGD2, a prostaglandin involved in smooth muscle contraction/relaxation and a potent inhibitor of platelet aggregation. Involved in a variety of CNS functions, such as sedation, NREM sleep and PGE2-induced allodynia, and may have an anti-apoptotic role in oligodendrocytes. Binds small non-substrate lipophilic molecules, including biliverdin, bilirubin, retinal, retinoic acid and thyroid hormone, and may act as a scavenger for harmful hydrophobic molecules and as a secretory retinoid and thyroid hormone transporter. Possibly involved in development and maintenance of the blood-brain, blood-retina, blood-aqueous humor and blood-testis barrier. It is likely to play important roles in both maturation and maintenance of the central nervous system and male reproductive system. Involved in PLA2G3-dependent maturation of mast cells. PLA2G3 is secreted by immature mast cells and acts on nearby fibroblasts upstream to PTDGS to synthesize PGD2, which in turn promotes mast cell maturation and degranulation via PTGDR. This chain is Prostaglandin-H2 D-isomerase (PTGDS), found in Ursus arctos (Brown bear).